The chain runs to 319 residues: G-protein coupled receptor 171 (319 aa).

The Extracellular portion of the chain corresponds to 1 to 21 (MTNSSTFCPVYRDLEPFTYFF). Residue N3 is glycosylated (N-linked (GlcNAc...) asparagine). The chain crosses the membrane as a helical span at residues 22–42 (YLVFLIGIIGSCFATWAFIQK). Over 43–48 (NTNHRC) the chain is Cytoplasmic. Residues 49-69 (VSIYLINLLTADFLLTLALPV) form a helical membrane-spanning segment. Residues 70-89 (KITVDLGVAPWKLRIFHCQV) are Extracellular-facing. A helical membrane pass occupies residues 90 to 110 (TACLIYINMYLSIIFLAFVSI). Topologically, residues 111–132 (DRCLQLTYSCKIYRIQEPGFAK) are cytoplasmic. A helical membrane pass occupies residues 133–153 (MISAVVWLMVLLIMVPNMIIP). The Extracellular portion of the chain corresponds to 154–181 (IKDIKEKPNVGCMEFKSEFGRNWHLLTN). A helical transmembrane segment spans residues 182–202 (FISIAIFFNFSAIILISNCLV). The Cytoplasmic portion of the chain corresponds to 203 to 224 (IRQLYRNKDNENYPNVKRALIS). The chain crosses the membrane as a helical span at residues 225 to 245 (ILLVTTGYIICFVPYHIVRIP). The Extracellular portion of the chain corresponds to 246–268 (YTLSQTEVISDCSTRISLFKAKE). Residues 269 to 289 (ATLLLAVSNLCFDPILYYHLS) traverse the membrane as a helical segment. Topologically, residues 290 to 319 (KAFRLKITETFASHKESKAQKEKPRSENNA) are cytoplasmic.

The protein belongs to the G-protein coupled receptor 1 family.

The protein resides in the cell membrane. In terms of biological role, G-protein coupled receptor for Big LEN, a 16-amino acid neuropeptide produced from the precursor protein, proSAAS (encoded by PCSK1N). Acts through a G(i)-alpha-mediated pathway in response to bigLEN. Big LEN-GPR171 system plays an important role in regulating feeding and metabolism. Also plays a role in modulating fear and anxiety-like behaviors in the basolateral amygdala. Big LEN-GPR171 modulates the mu-type opioid receptor signaling and antinociception. Acts as a negative regulator T cell function. This is G-protein coupled receptor 171 (GPR171) from Bos taurus (Bovine).